Reading from the N-terminus, the 382-residue chain is MHLPTLSLVEELIARRSVTPDDAGCQALIAARLAALGFEIHALPHGPADARVDNLWAIRRGQGDGPTLVLAGHTDVVPTGPLERWHSDPFVPSHRAGLLYGRGAADMKTSLAAMVVAVEEFVAAHPVHRGSVAFLLTSDEEGPAVDGTVKVCEWLAARGERLDACIVGEPTSVRQLGDMIKNGRRGSLSGRLTVVGQQGHIAYPHLARNPIHLAAPALAELAQQRWDDGNEHFPPTSWQMSNIHAGTGATNVIPGELVVDFNFRFSTESTPESLQQQVHALLDRHGLEHRIAWTLGGRPFLTRPGSLTDALSQAITAVTGLRTELSTTGGTSDGRFIAQICPQVVEFGPVNATIHQVDEHCEVAALGPLKDIYRRTLEAMLA.

His-73 is a Zn(2+) binding site. The active site involves Asp-75. Residue Asp-106 participates in Zn(2+) binding. The active-site Proton acceptor is the Glu-140. The Zn(2+) site is built by Glu-141, Glu-169, and His-355.

This sequence belongs to the peptidase M20A family. DapE subfamily. As to quaternary structure, homodimer. Requires Zn(2+) as cofactor. Co(2+) serves as cofactor.

It carries out the reaction N-succinyl-(2S,6S)-2,6-diaminopimelate + H2O = (2S,6S)-2,6-diaminopimelate + succinate. It participates in amino-acid biosynthesis; L-lysine biosynthesis via DAP pathway; LL-2,6-diaminopimelate from (S)-tetrahydrodipicolinate (succinylase route): step 3/3. Functionally, catalyzes the hydrolysis of N-succinyl-L,L-diaminopimelic acid (SDAP), forming succinate and LL-2,6-diaminopimelate (DAP), an intermediate involved in the bacterial biosynthesis of lysine and meso-diaminopimelic acid, an essential component of bacterial cell walls. This chain is Succinyl-diaminopimelate desuccinylase, found in Leptothrix cholodnii (strain ATCC 51168 / LMG 8142 / SP-6) (Leptothrix discophora (strain SP-6)).